A 320-amino-acid polypeptide reads, in one-letter code: Malate dehydrogenase (320 aa).

Residues 10–15 (GAGQIG) and Asp34 each bind NAD(+). Substrate contacts are provided by Arg83 and Arg89. NAD(+) contacts are provided by residues Asn96 and 119–121 (ITN). Substrate contacts are provided by Asn121 and Arg152. Residue His176 is the Proton acceptor of the active site.

Belongs to the LDH/MDH superfamily. MDH type 3 family.

It catalyses the reaction (S)-malate + NAD(+) = oxaloacetate + NADH + H(+). In terms of biological role, catalyzes the reversible oxidation of malate to oxaloacetate. This chain is Malate dehydrogenase, found in Dinoroseobacter shibae (strain DSM 16493 / NCIMB 14021 / DFL 12).